The sequence spans 119 residues: Holo-[acyl-carrier-protein] synthase (119 aa).

Mg(2+) contacts are provided by Asp-8 and Glu-58.

It belongs to the P-Pant transferase superfamily. AcpS family. It depends on Mg(2+) as a cofactor.

It is found in the cytoplasm. The catalysed reaction is apo-[ACP] + CoA = holo-[ACP] + adenosine 3',5'-bisphosphate + H(+). In terms of biological role, transfers the 4'-phosphopantetheine moiety from coenzyme A to a Ser of acyl-carrier-protein. This Streptococcus mutans serotype c (strain ATCC 700610 / UA159) protein is Holo-[acyl-carrier-protein] synthase.